Consider the following 888-residue polypeptide: Alanine--tRNA ligase (888 aa).

Positions 571, 575, 674, and 678 each coordinate Zn(2+).

The protein belongs to the class-II aminoacyl-tRNA synthetase family. Zn(2+) serves as cofactor.

Its subcellular location is the cytoplasm. The catalysed reaction is tRNA(Ala) + L-alanine + ATP = L-alanyl-tRNA(Ala) + AMP + diphosphate. Catalyzes the attachment of alanine to tRNA(Ala) in a two-step reaction: alanine is first activated by ATP to form Ala-AMP and then transferred to the acceptor end of tRNA(Ala). Also edits incorrectly charged Ser-tRNA(Ala) and Gly-tRNA(Ala) via its editing domain. The chain is Alanine--tRNA ligase from Nocardia farcinica (strain IFM 10152).